Reading from the N-terminus, the 156-residue chain is ATP synthase subunit b (156 aa).

Residues 7-29 (LFAQMVVFLVLAWFTMKFVWPPL) traverse the membrane as a helical segment.

This sequence belongs to the ATPase B chain family. F-type ATPases have 2 components, F(1) - the catalytic core - and F(0) - the membrane proton channel. F(1) has five subunits: alpha(3), beta(3), gamma(1), delta(1), epsilon(1). F(0) has three main subunits: a(1), b(2) and c(10-14). The alpha and beta chains form an alternating ring which encloses part of the gamma chain. F(1) is attached to F(0) by a central stalk formed by the gamma and epsilon chains, while a peripheral stalk is formed by the delta and b chains.

The protein localises to the cell inner membrane. In terms of biological role, f(1)F(0) ATP synthase produces ATP from ADP in the presence of a proton or sodium gradient. F-type ATPases consist of two structural domains, F(1) containing the extramembraneous catalytic core and F(0) containing the membrane proton channel, linked together by a central stalk and a peripheral stalk. During catalysis, ATP synthesis in the catalytic domain of F(1) is coupled via a rotary mechanism of the central stalk subunits to proton translocation. Functionally, component of the F(0) channel, it forms part of the peripheral stalk, linking F(1) to F(0). In Burkholderia lata (strain ATCC 17760 / DSM 23089 / LMG 22485 / NCIMB 9086 / R18194 / 383), this protein is ATP synthase subunit b.